Reading from the N-terminus, the 72-residue chain is Putative transmembrane protein DDB_G0272126 (72 aa).

Transmembrane regions (helical) follow at residues 6–26 (KIIK…NTII) and 38–58 (IILV…IFYG).

Its subcellular location is the membrane. This is Putative transmembrane protein DDB_G0272126 from Dictyostelium discoideum (Social amoeba).